Here is a 356-residue protein sequence, read N- to C-terminus: D-amino-acid oxidase (356 aa).

Residues 1-17 (MAKIVVIGAGVAGLTTA) form the signal peptide. Residues A9, S44, G48, and N50 each contribute to the FAD site. F54 provides a ligand contact to anthranilate. V171 lines the FAD pocket. N-linked (GlcNAc...) asparagine glycosylation occurs at N192. Y243 provides a ligand contact to anthranilate. Y243 contributes to the (R)-lactate binding site. An N-linked (GlcNAc...) asparagine glycan is attached at N262. Positions 302, 329, 332, 333, and 334 each coordinate FAD. R302 serves as a coordination point for anthranilate. Position 302 (R302) interacts with (R)-lactate.

Belongs to the DAMOX/DASOX family. It depends on FAD as a cofactor.

It is found in the peroxisome matrix. It catalyses the reaction a D-alpha-amino acid + O2 + H2O = a 2-oxocarboxylate + H2O2 + NH4(+). It carries out the reaction D-alanine + O2 + H2O = pyruvate + H2O2 + NH4(+). The catalysed reaction is D-serine + O2 + H2O = 3-hydroxypyruvate + H2O2 + NH4(+). The enzyme catalyses D-phenylalanine + O2 + H2O = 3-phenylpyruvate + H2O2 + NH4(+). It catalyses the reaction D-lysine + O2 + H2O = 6-amino-2-oxohexanoate + H2O2 + NH4(+). It carries out the reaction D-tyrosine + O2 + H2O = 3-(4-hydroxyphenyl)pyruvate + H2O2 + NH4(+). The catalysed reaction is D-methionine + O2 + H2O = 4-methylsulfanyl-2-oxobutanoate + H2O2 + NH4(+). The enzyme catalyses D-tryptophan + O2 + H2O = indole-3-pyruvate + H2O2 + NH4(+). It catalyses the reaction D-leucine + O2 + H2O = 4-methyl-2-oxopentanoate + H2O2 + NH4(+). It carries out the reaction D-valine + O2 + H2O = 3-methyl-2-oxobutanoate + H2O2 + NH4(+). With respect to regulation, inhibited by benzoate and hypochlorite. Functionally, catalyzes the oxidative deamination of D-amino acids with broad substrate specificity. Enables the organism to utilize D-amino acids as a source of nutrients. This is D-amino-acid oxidase from Trigonopsis variabilis (Yeast).